The primary structure comprises 592 residues: Monocopper oxidase-like protein SKS2 (592 aa).

A signal peptide spans Met1–Ala23. Asn61, Asn110, Asn172, Asn203, Asn259, Asn280, Asn295, Asn344, Asn364, Asn433, and Asn447 each carry an N-linked (GlcNAc...) asparagine glycan. His455 lines the Cu cation pocket. Residues Asn476 and Asn536 are each glycosylated (N-linked (GlcNAc...) asparagine). Ser564 carries GPI-anchor amidated serine lipidation. The propeptide at Ala565–Cys592 is removed in mature form.

Belongs to the multicopper oxidase family. The cofactor is Cu cation.

It localises to the cell membrane. This Arabidopsis thaliana (Mouse-ear cress) protein is Monocopper oxidase-like protein SKS2 (SKS2).